The chain runs to 386 residues: Phosphoglycerate kinase (386 aa).

Substrate is bound by residues 21–23 (DLN), arginine 36, 59–62 (HLGR), arginine 113, and arginine 146. ATP is bound by residues lysine 197, glutamate 314, and 340–343 (GGDT).

Belongs to the phosphoglycerate kinase family. In terms of assembly, monomer.

Its subcellular location is the cytoplasm. It carries out the reaction (2R)-3-phosphoglycerate + ATP = (2R)-3-phospho-glyceroyl phosphate + ADP. It participates in carbohydrate degradation; glycolysis; pyruvate from D-glyceraldehyde 3-phosphate: step 2/5. The sequence is that of Phosphoglycerate kinase from Azotobacter vinelandii (strain DJ / ATCC BAA-1303).